A 308-amino-acid chain; its full sequence is Methionyl-tRNA formyltransferase (308 aa).

(6S)-5,6,7,8-tetrahydrofolate is bound at residue 110–113; that stretch reads SLLP.

It belongs to the Fmt family.

It carries out the reaction L-methionyl-tRNA(fMet) + (6R)-10-formyltetrahydrofolate = N-formyl-L-methionyl-tRNA(fMet) + (6S)-5,6,7,8-tetrahydrofolate + H(+). Attaches a formyl group to the free amino group of methionyl-tRNA(fMet). The formyl group appears to play a dual role in the initiator identity of N-formylmethionyl-tRNA by promoting its recognition by IF2 and preventing the misappropriation of this tRNA by the elongation apparatus. In Neisseria gonorrhoeae (strain ATCC 700825 / FA 1090), this protein is Methionyl-tRNA formyltransferase.